The primary structure comprises 305 residues: Carbamate kinase (305 aa).

The protein belongs to the carbamate kinase family.

The protein localises to the cytoplasm. The catalysed reaction is hydrogencarbonate + NH4(+) + ATP = carbamoyl phosphate + ADP + H2O + H(+). Its pathway is metabolic intermediate metabolism; carbamoyl phosphate degradation; CO(2) and NH(3) from carbamoyl phosphate: step 1/1. The protein is Carbamate kinase (arcC) of Thermoplasma volcanium (strain ATCC 51530 / DSM 4299 / JCM 9571 / NBRC 15438 / GSS1).